A 263-amino-acid polypeptide reads, in one-letter code: Thymidylate kinase (263 aa).

The transit peptide at 1–51 directs the protein to the mitochondrion; it reads MKRICSVSSVQLFSRSFRALASPRSLNYPLQCIKRSSVRMESSNFSSGVRT. Position 66 to 74 (66 to 74) interacts with ATP; the sequence is GLDRSGKST.

The protein belongs to the thymidylate kinase family. Expressed in root, rosette leaves, flower buds, flowers and siliques.

The protein localises to the mitochondrion. It is found in the cytoplasm. Its subcellular location is the nucleus. The protein resides in the nucleoplasm. The enzyme catalyses dTMP + ATP = dTDP + ADP. It participates in pyrimidine metabolism; dTTP biosynthesis. Functionally, catalyzes the conversion of dTMP to dTDP. Involved in the regulation of DNA replication. Is essential to promote the first division of the zygote. The polypeptide is Thymidylate kinase (Arabidopsis thaliana (Mouse-ear cress)).